A 216-amino-acid chain; its full sequence is Ras-related protein RABE1c (216 aa).

22 to 29 (GDSGVGKS) serves as a coordination point for GTP. The short motif at 44-52 (FITTIGIDF) is the Effector region element. GTP is bound by residues 70–74 (DTAGQ), 128–131 (NKAD), and 159–160 (SA). Residues Cys-213 and Cys-214 are each lipidated (S-geranylgeranyl cysteine).

It belongs to the small GTPase superfamily. Rab family. In terms of assembly, interacts with PI5K2.

It localises to the golgi apparatus membrane. The protein localises to the cell membrane. Involved in membrane trafficking from the Golgi to the plasma membrane. This is Ras-related protein RABE1c (RABE1C) from Arabidopsis thaliana (Mouse-ear cress).